We begin with the raw amino-acid sequence, 198 residues long: Ribonuclease HII (198 aa).

The region spanning 14 to 198 is the RNase H type-2 domain; it reads HMIVGVDEAG…FAPVAQLQLV (185 aa). 3 residues coordinate a divalent metal cation: Asp-20, Glu-21, and Asp-110.

It belongs to the RNase HII family. Mn(2+) is required as a cofactor. Mg(2+) serves as cofactor.

It localises to the cytoplasm. The enzyme catalyses Endonucleolytic cleavage to 5'-phosphomonoester.. In terms of biological role, endonuclease that specifically degrades the RNA of RNA-DNA hybrids. The polypeptide is Ribonuclease HII (Sphingopyxis alaskensis (strain DSM 13593 / LMG 18877 / RB2256) (Sphingomonas alaskensis)).